The following is a 230-amino-acid chain: Ribonuclease 3 (230 aa).

The RNase III domain maps to 10–133 (DPRLLSRIGY…IIGAIYLDSS (124 aa)). Glutamate 46 contacts Mg(2+). Aspartate 50 is a catalytic residue. Aspartate 119 and glutamate 122 together coordinate Mg(2+). Residue glutamate 122 is part of the active site. Residues 161 to 230 (DPKSRLQEYL…AAEILKLLEQ (70 aa)) enclose the DRBM domain.

Belongs to the ribonuclease III family. As to quaternary structure, homodimer. Mg(2+) serves as cofactor.

The protein localises to the cytoplasm. The catalysed reaction is Endonucleolytic cleavage to 5'-phosphomonoester.. Functionally, digests double-stranded RNA. Involved in the processing of primary rRNA transcript to yield the immediate precursors to the large and small rRNAs (23S and 16S). Processes some mRNAs, and tRNAs when they are encoded in the rRNA operon. Processes pre-crRNA and tracrRNA of type II CRISPR loci if present in the organism. The sequence is that of Ribonuclease 3 (rnc) from Acinetobacter baumannii (strain AB307-0294).